Here is a 533-residue protein sequence, read N- to C-terminus: CTP synthase (533 aa).

The interval 1–269 is amidoligase domain; it reads MKKNLKILVI…HEILSSKLNI (269 aa). Ser16 lines the CTP pocket. Ser16 provides a ligand contact to UTP. ATP-binding positions include 17–22 and Asp73; that span reads GIGKGV. The Mg(2+) site is built by Asp73 and Glu143. CTP contacts are provided by residues 150–152, 190–195, and Lys226; these read DME and KSKPTQ. Residues 190–195 and Lys226 contribute to the UTP site; that span reads KSKPTQ. Residues 304–533 enclose the Glutamine amidotransferase type-1 domain; sequence YAELDDSYAS…LFLGLIKACI (230 aa). Gly355 serves as a coordination point for L-glutamine. The active-site Nucleophile; for glutamine hydrolysis is the Cys382. L-glutamine-binding positions include 383–386, Glu406, and Arg466; that span reads LGLQ. Catalysis depends on residues His511 and Glu513.

Belongs to the CTP synthase family. As to quaternary structure, homotetramer.

It carries out the reaction UTP + L-glutamine + ATP + H2O = CTP + L-glutamate + ADP + phosphate + 2 H(+). The catalysed reaction is L-glutamine + H2O = L-glutamate + NH4(+). The enzyme catalyses UTP + NH4(+) + ATP = CTP + ADP + phosphate + 2 H(+). The protein operates within pyrimidine metabolism; CTP biosynthesis via de novo pathway; CTP from UDP: step 2/2. Its activity is regulated as follows. Allosterically activated by GTP, when glutamine is the substrate; GTP has no effect on the reaction when ammonia is the substrate. The allosteric effector GTP functions by stabilizing the protein conformation that binds the tetrahedral intermediate(s) formed during glutamine hydrolysis. Inhibited by the product CTP, via allosteric rather than competitive inhibition. Catalyzes the ATP-dependent amination of UTP to CTP with either L-glutamine or ammonia as the source of nitrogen. Regulates intracellular CTP levels through interactions with the four ribonucleotide triphosphates. In Borreliella burgdorferi (strain ATCC 35210 / DSM 4680 / CIP 102532 / B31) (Borrelia burgdorferi), this protein is CTP synthase.